Consider the following 157-residue polypeptide: Protein Smg homolog (157 aa).

Belongs to the Smg family.

The sequence is that of Protein Smg homolog from Aeromonas salmonicida (strain A449).